The primary structure comprises 757 residues: Glutathione biosynthesis bifunctional protein GshAB (757 aa).

Residues 1–337 are glutamate--cysteine ligase; the sequence is MKIQHIIHEN…LGKARLAEVA (337 aa). The ATP-grasp domain occupies 494-753; it reads KKVLQKAGFN…LTQNVIKMLF (260 aa). An ATP-binding site is contributed by 521 to 580; the sequence is ALFENRAVVIKPKSTNYGLGITIFQQGVQNREDFAKALEIAFREDKEVMVEDYLVGTEYR. 3 residues coordinate Mg(2+): Asp702, Glu723, and Asn725. Asp702, Glu723, and Asn725 together coordinate Mn(2+).

The protein in the N-terminal section; belongs to the glutamate--cysteine ligase type 1 family. Type 2 subfamily. In terms of assembly, monomer. The cofactor is Mg(2+). Mn(2+) serves as cofactor.

It catalyses the reaction L-cysteine + L-glutamate + ATP = gamma-L-glutamyl-L-cysteine + ADP + phosphate + H(+). The catalysed reaction is gamma-L-glutamyl-L-cysteine + glycine + ATP = glutathione + ADP + phosphate + H(+). It participates in sulfur metabolism; glutathione biosynthesis; glutathione from L-cysteine and L-glutamate: step 1/2. Its pathway is sulfur metabolism; glutathione biosynthesis; glutathione from L-cysteine and L-glutamate: step 2/2. Functionally, synthesizes glutathione from L-glutamate and L-cysteine via gamma-L-glutamyl-L-cysteine. This is Glutathione biosynthesis bifunctional protein GshAB from Pasteurella multocida (strain Pm70).